The sequence spans 422 residues: L-threonine dehydratase biosynthetic IlvA (422 aa).

Lys56 bears the N6-(pyridoxal phosphate)lysine mark. Residues Asn83, 189–193 (GGGGL), and Ser315 each bind pyridoxal 5'-phosphate. In terms of domain architecture, ACT-like spans 339–413 (HYFILNFPQR…FDKSNIYINE (75 aa)).

It belongs to the serine/threonine dehydratase family. In terms of assembly, homotetramer. The cofactor is pyridoxal 5'-phosphate.

The enzyme catalyses L-threonine = 2-oxobutanoate + NH4(+). The protein operates within amino-acid biosynthesis; L-isoleucine biosynthesis; 2-oxobutanoate from L-threonine: step 1/1. Its function is as follows. Catalyzes the anaerobic formation of alpha-ketobutyrate and ammonia from threonine in a two-step reaction. The first step involved a dehydration of threonine and a production of enamine intermediates (aminocrotonate), which tautomerizes to its imine form (iminobutyrate). Both intermediates are unstable and short-lived. The second step is the nonenzymatic hydrolysis of the enamine/imine intermediates to form 2-ketobutyrate and free ammonia. In the low water environment of the cell, the second step is accelerated by RidA. This Staphylococcus saprophyticus subsp. saprophyticus (strain ATCC 15305 / DSM 20229 / NCIMB 8711 / NCTC 7292 / S-41) protein is L-threonine dehydratase biosynthetic IlvA (ilvA).